A 226-amino-acid chain; its full sequence is Peroxynitrite isomerase 2 (226 aa).

The GXWXGXG motif lies at 73–79 (GVWRGEG). Positions 189 and 216 each coordinate heme b.

Belongs to the nitrobindin family. Homodimer. It depends on heme b as a cofactor.

The catalysed reaction is peroxynitrite = nitrate. Its pathway is nitrogen metabolism. In terms of biological role, heme-binding protein able to scavenge peroxynitrite and to protect free L-tyrosine against peroxynitrite-mediated nitration, by acting as a peroxynitrite isomerase that converts peroxynitrite to nitrate. Therefore, this protein likely plays a role in peroxynitrite sensing and in the detoxification of reactive nitrogen and oxygen species (RNS and ROS, respectively). Is able to bind nitric oxide (NO) in vitro, but may act as a sensor of peroxynitrite levels in vivo. This Mycobacterium bovis (strain ATCC BAA-935 / AF2122/97) protein is Peroxynitrite isomerase 2.